The primary structure comprises 248 residues: 2,3-bisphosphoglycerate-dependent phosphoglycerate mutase 2 (248 aa).

Substrate-binding positions include 8 to 15 (RHGESAWN), 21 to 22 (TG), R60, 87 to 90 (EKHY), K98, 114 to 115 (RR), and 183 to 184 (GN). The active-site Tele-phosphohistidine intermediate is H9. E87 serves as the catalytic Proton donor/acceptor.

The protein belongs to the phosphoglycerate mutase family. BPG-dependent PGAM subfamily.

The enzyme catalyses (2R)-2-phosphoglycerate = (2R)-3-phosphoglycerate. It participates in carbohydrate degradation; glycolysis; pyruvate from D-glyceraldehyde 3-phosphate: step 3/5. Catalyzes the interconversion of 2-phosphoglycerate and 3-phosphoglycerate. This is 2,3-bisphosphoglycerate-dependent phosphoglycerate mutase 2 from Bacteroides thetaiotaomicron (strain ATCC 29148 / DSM 2079 / JCM 5827 / CCUG 10774 / NCTC 10582 / VPI-5482 / E50).